Consider the following 372-residue polypeptide: Peptidyl-prolyl cis-trans isomerase D (372 aa).

A PPIase cyclophilin-type domain is found at 14-178 (YFDISIGGKS…KEALIVDCGE (165 aa)). TPR repeat units lie at residues 219-252 (AKAS…INEE), 271-304 (FSLN…GGVK), and 309-342 (AKAF…APND).

This sequence belongs to the cyclophilin-type PPIase family. PPIase D subfamily.

It localises to the cytoplasm. The catalysed reaction is [protein]-peptidylproline (omega=180) = [protein]-peptidylproline (omega=0). Its function is as follows. PPIases accelerate the folding of proteins. It catalyzes the cis-trans isomerization of proline imidic peptide bonds in oligopeptides. In Gibberella zeae (strain ATCC MYA-4620 / CBS 123657 / FGSC 9075 / NRRL 31084 / PH-1) (Wheat head blight fungus), this protein is Peptidyl-prolyl cis-trans isomerase D (CPR6).